Reading from the N-terminus, the 1114-residue chain is Extracellular sulfatase SULF-1 homolog (1114 aa).

Residues Met1–Ser25 form the signal peptide. Ca(2+) contacts are provided by Asp62, Asp63, and Cys98. The Nucleophile role is filled by Cys98. Residue Cys98 is modified to 3-oxoalanine (Cys). Residues Asn122, Asn159, Asn181, Asn208, and Asn251 are each glycosylated (N-linked (GlcNAc...) asparagine). Residues Asp327 and His328 each contribute to the Ca(2+) site. Residue Asn447 is glycosylated (N-linked (GlcNAc...) asparagine). Residues Ser466–Ala479 are compositionally biased toward low complexity. Residues Ser466–Met504 are disordered. The span at Glu483–Gly502 shows a compositional bias: acidic residues. 3 N-linked (GlcNAc...) asparagine glycosylation sites follow: Asn683, Asn713, and Asn743. A disordered region spans residues Lys781–Ala812. A compositionally biased stretch (basic and acidic residues) spans Arg795 to Asp804. Residue Asn817 is glycosylated (N-linked (GlcNAc...) asparagine). Over residues Ala876–Arg895 the composition is skewed to basic and acidic residues. The disordered stretch occupies residues Ala876 to Arg901. 3 N-linked (GlcNAc...) asparagine glycosylation sites follow: Asn945, Asn955, and Asn974. Positions Leu1073–Ala1114 are disordered. The span at Thr1095 to Ala1114 shows a compositional bias: polar residues.

This sequence belongs to the sulfatase family. Ca(2+) serves as cofactor. The conversion to 3-oxoalanine (also known as C-formylglycine, FGly), of a serine or cysteine residue in prokaryotes and of a cysteine residue in eukaryotes, is critical for catalytic activity.

The protein localises to the endoplasmic reticulum. The protein resides in the golgi apparatus. Its subcellular location is the golgi stack. It localises to the cell surface. The polypeptide is Extracellular sulfatase SULF-1 homolog (Sulf1) (Drosophila melanogaster (Fruit fly)).